The primary structure comprises 255 residues: Taurine import ATP-binding protein TauB (255 aa).

The ABC transporter domain maps to 2-229 (LQISHLYADY…RFVAGESSRS (228 aa)). 34–41 (GPSGCGKT) contacts ATP.

Belongs to the ABC transporter superfamily. Taurine importer (TC 3.A.1.17.1) family. The complex is composed of two ATP-binding proteins (TauB), two transmembrane proteins (TauC) and a solute-binding protein (TauA).

It is found in the cell inner membrane. The enzyme catalyses taurine(out) + ATP + H2O = taurine(in) + ADP + phosphate + H(+). Functionally, part of the ABC transporter complex TauABC involved in taurine import. Responsible for energy coupling to the transport system. The chain is Taurine import ATP-binding protein TauB from Shigella dysenteriae serotype 1 (strain Sd197).